A 285-amino-acid polypeptide reads, in one-letter code: Ribosomal RNA small subunit methyltransferase H (285 aa).

Residues 34-36, D51, F75, D96, and H103 contribute to the S-adenosyl-L-methionine site; that span reads AGH. The disordered stretch occupies residues 259–285; sequence LVPSEKEAAQNPRARSAKLRAAEKEAP.

It belongs to the methyltransferase superfamily. RsmH family.

It is found in the cytoplasm. It catalyses the reaction cytidine(1402) in 16S rRNA + S-adenosyl-L-methionine = N(4)-methylcytidine(1402) in 16S rRNA + S-adenosyl-L-homocysteine + H(+). In terms of biological role, specifically methylates the N4 position of cytidine in position 1402 (C1402) of 16S rRNA. The protein is Ribosomal RNA small subunit methyltransferase H of Thermus thermophilus (strain ATCC 27634 / DSM 579 / HB8).